Reading from the N-terminus, the 212-residue chain is Thymidylate kinase (212 aa).

11–18 (GPEGAGKT) provides a ligand contact to ATP.

Belongs to the thymidylate kinase family.

The enzyme catalyses dTMP + ATP = dTDP + ADP. Its function is as follows. Phosphorylation of dTMP to form dTDP in both de novo and salvage pathways of dTTP synthesis. In Streptococcus pneumoniae (strain Taiwan19F-14), this protein is Thymidylate kinase.